We begin with the raw amino-acid sequence, 401 residues long: Restriction of telomere capping protein 4 (401 aa).

Phosphoserine is present on serine 23. The segment covering 35–48 (KHDIHDRESDDLSG) has biased composition (basic and acidic residues). Residues 35–59 (KHDIHDRESDDLSGHDAFSPSKKRG) are disordered.

Belongs to the RTC4 family.

The protein localises to the cytoplasm. The protein resides in the nucleus. Its function is as follows. May be involved in a process influencing telomere capping. The chain is Restriction of telomere capping protein 4 (RTC4) from Saccharomyces cerevisiae (strain ATCC 204508 / S288c) (Baker's yeast).